The sequence spans 67 residues: UPF0253 protein VS_2370 (67 aa).

This sequence belongs to the UPF0253 family.

This Vibrio atlanticus (strain LGP32) (Vibrio splendidus (strain Mel32)) protein is UPF0253 protein VS_2370.